Consider the following 596-residue polypeptide: V-type ATP synthase alpha chain (596 aa).

ATP is bound at residue 233–240 (GPFGAGKT).

It belongs to the ATPase alpha/beta chains family.

The enzyme catalyses ATP + H2O + 4 H(+)(in) = ADP + phosphate + 5 H(+)(out). Functionally, produces ATP from ADP in the presence of a proton gradient across the membrane. The V-type alpha chain is a catalytic subunit. The protein is V-type ATP synthase alpha chain of Streptococcus sanguinis (strain SK36).